We begin with the raw amino-acid sequence, 190 residues long: GTP cyclohydrolase 1 (190 aa).

Zn(2+) contacts are provided by cysteine 80, histidine 83, and cysteine 151.

Belongs to the GTP cyclohydrolase I family. Toroid-shaped homodecamer, composed of two pentamers of five dimers.

It carries out the reaction GTP + H2O = 7,8-dihydroneopterin 3'-triphosphate + formate + H(+). The protein operates within cofactor biosynthesis; 7,8-dihydroneopterin triphosphate biosynthesis; 7,8-dihydroneopterin triphosphate from GTP: step 1/1. The chain is GTP cyclohydrolase 1 (folE) from Rickettsia prowazekii (strain Madrid E).